A 185-amino-acid polypeptide reads, in one-letter code: CASP-like protein SELMODRAFT_413556 (185 aa).

Residues 1 to 89 (MATLPLSLIF…AVTVLFYLAK (89 aa)) lie on the Cytoplasmic side of the membrane. A helical membrane pass occupies residues 90-110 (LVFGILGLALSIIWLLHIIVF). Topologically, residues 111–131 (MLVNPPAFPFLNQVFIQLDSA) are extracellular. The helical transmembrane segment at 132 to 152 (WGLLGTTAFAIFCYYLIMSVI) threads the bilayer. Topologically, residues 153–163 (SGEMHSIHPMK) are cytoplasmic. A helical transmembrane segment spans residues 164-184 (YQGTLMNSFLFNVAIILLCST). Arginine 185 is a topological domain (extracellular).

The protein belongs to the Casparian strip membrane proteins (CASP) family. Homodimer and heterodimers.

The protein localises to the cell membrane. The protein is CASP-like protein SELMODRAFT_413556 of Selaginella moellendorffii (Spikemoss).